The chain runs to 252 residues: Indole-3-glycerol phosphate synthase (252 aa).

The protein belongs to the TrpC family.

The catalysed reaction is 1-(2-carboxyphenylamino)-1-deoxy-D-ribulose 5-phosphate + H(+) = (1S,2R)-1-C-(indol-3-yl)glycerol 3-phosphate + CO2 + H2O. It functions in the pathway amino-acid biosynthesis; L-tryptophan biosynthesis; L-tryptophan from chorismate: step 4/5. This Listeria monocytogenes serovar 1/2a (strain ATCC BAA-679 / EGD-e) protein is Indole-3-glycerol phosphate synthase.